A 361-amino-acid chain; its full sequence is Chorismate synthase (361 aa).

Residues R48 and R54 each coordinate NADP(+). Residues 125–127 (RSS), 238–239 (NA), G278, 293–297 (KPTSS), and R319 contribute to the FMN site.

The protein belongs to the chorismate synthase family. As to quaternary structure, homotetramer. FMNH2 is required as a cofactor.

The catalysed reaction is 5-O-(1-carboxyvinyl)-3-phosphoshikimate = chorismate + phosphate. It participates in metabolic intermediate biosynthesis; chorismate biosynthesis; chorismate from D-erythrose 4-phosphate and phosphoenolpyruvate: step 7/7. Catalyzes the anti-1,4-elimination of the C-3 phosphate and the C-6 proR hydrogen from 5-enolpyruvylshikimate-3-phosphate (EPSP) to yield chorismate, which is the branch point compound that serves as the starting substrate for the three terminal pathways of aromatic amino acid biosynthesis. This reaction introduces a second double bond into the aromatic ring system. The protein is Chorismate synthase of Citrobacter koseri (strain ATCC BAA-895 / CDC 4225-83 / SGSC4696).